Here is a 66-residue protein sequence, read N- to C-terminus: UPF0370 protein YpfN (66 aa).

The helical transmembrane segment at 4-24 (LAKYWWILVIVFLVGVLLNVI) threads the bilayer. Residues 39 to 66 (KPELPPHRDFNDKWDDDDDWPKKDQPKK) are disordered. A compositionally biased stretch (basic and acidic residues) spans 42-51 (LPPHRDFNDK).

Belongs to the UPF0370 family.

It is found in the cell membrane. The polypeptide is UPF0370 protein YpfN (Escherichia coli O139:H28 (strain E24377A / ETEC)).